The primary structure comprises 307 residues: Aspartate carbamoyltransferase catalytic subunit (307 aa).

Residues Arg-55 and Thr-56 each contribute to the carbamoyl phosphate site. Lys-85 contacts L-aspartate. Carbamoyl phosphate contacts are provided by Arg-106, His-135, and Gln-138. The L-aspartate site is built by Arg-168 and Arg-230. Residues Leu-268 and Pro-269 each contribute to the carbamoyl phosphate site.

This sequence belongs to the aspartate/ornithine carbamoyltransferase superfamily. ATCase family. Heterododecamer (2C3:3R2) of six catalytic PyrB chains organized as two trimers (C3), and six regulatory PyrI chains organized as three dimers (R2).

It carries out the reaction carbamoyl phosphate + L-aspartate = N-carbamoyl-L-aspartate + phosphate + H(+). It functions in the pathway pyrimidine metabolism; UMP biosynthesis via de novo pathway; (S)-dihydroorotate from bicarbonate: step 2/3. Functionally, catalyzes the condensation of carbamoyl phosphate and aspartate to form carbamoyl aspartate and inorganic phosphate, the committed step in the de novo pyrimidine nucleotide biosynthesis pathway. In Photorhabdus laumondii subsp. laumondii (strain DSM 15139 / CIP 105565 / TT01) (Photorhabdus luminescens subsp. laumondii), this protein is Aspartate carbamoyltransferase catalytic subunit.